The chain runs to 220 residues: Competence protein ComFC (220 aa).

The protein belongs to the ComF/GntX family. Monomer and dimer in solution. Interacts with ComFA and DprA; ComFA-ComFC form rings about 150 Angstroms in diameter with apparent 6-fold symmetry.

Its function is as follows. Involved in transformation (genetic competence for DNA uptake). This chain is Competence protein ComFC, found in Streptococcus pneumoniae (strain ATCC BAA-255 / R6).